A 239-amino-acid chain; its full sequence is Ribonuclease 3 (239 aa).

The RNase III domain occupies 18–141; it reads YTTLEKALGY…LMAGVYLEAG (124 aa). Residue Glu54 coordinates Mg(2+). The active site involves Asp58. The Mg(2+) site is built by Ser127 and Glu130. Glu130 is an active-site residue. One can recognise a DRBM domain in the interval 168 to 237; it reads DYKTALQELT…AYQALQKLKE (70 aa).

Belongs to the ribonuclease III family. In terms of assembly, homodimer. It depends on Mg(2+) as a cofactor.

It localises to the cytoplasm. It catalyses the reaction Endonucleolytic cleavage to 5'-phosphomonoester.. In terms of biological role, digests double-stranded RNA. Involved in the processing of primary rRNA transcript to yield the immediate precursors to the large and small rRNAs (23S and 16S). Processes some mRNAs, and tRNAs when they are encoded in the rRNA operon. Processes pre-crRNA and tracrRNA of type II CRISPR loci if present in the organism. The sequence is that of Ribonuclease 3 from Helicobacter pylori (strain ATCC 700392 / 26695) (Campylobacter pylori).